Reading from the N-terminus, the 234-residue chain is MASFLKISTLIAIVSTLQTTLAAPPACLLACVAKVEKGSKCSGLNDLSCICTTKNSDVEKCLKEICPNGDADTAISAFKSSCSGYSSQSSSSESESESASSEESSASASASASSSAGKSSNVEASTTKESSSAKASSSAAGSSEAVSSATETASTEESSSAAASASASASATKESSSEAASSTSSTLKESKTSTTAAASSSESTTATGVLTQSEGSAAKVGLGALVGLVGAVLL.

Positions 1–22 are cleaved as a signal peptide; sequence MASFLKISTLIAIVSTLQTTLA. The CFEM domain occupies 23–109; that stretch reads APPACLLACV…SSEESSASAS (87 aa). Disulfide bonds link Cys27/Cys66, Cys31/Cys61, Cys41/Cys49, and Cys51/Cys82. Asp46 contacts heme. Over residues 86–207 the composition is skewed to low complexity; it reads SSQSSSSESE…ASSSESTTAT (122 aa). The segment at 86-208 is disordered; sequence SSQSSSSESE…SSSESTTATG (123 aa). Gly215 is lipidated: GPI-anchor amidated glycine. Positions 216 to 234 are cleaved as a propeptide — removed in mature form; sequence SAAKVGLGALVGLVGAVLL.

This sequence belongs to the CCW14 family. The GPI-anchor is attached to the protein in the endoplasmic reticulum and serves to target the protein to the cell surface. There, the glucosamine-inositol phospholipid moiety is cleaved off and the GPI-modified mannoprotein is covalently attached via its lipidless GPI glycan remnant to the 1,6-beta-glucan of the outer cell wall layer.

The protein localises to the secreted. The protein resides in the cell wall. It localises to the membrane. Functionally, beta-glucan associated cell wall protein involved in cell wall structure. May serve as cross-linking or coat-forming wall protein. This is Covalently-linked cell wall protein 14 (SSR1) from Candida albicans (strain SC5314 / ATCC MYA-2876) (Yeast).